The following is a 700-amino-acid chain: MRMKRIHILFVVIFLLCLRYGYSIKKKRSPNNKNRLFINKRLKYINSKIISRRKENYVKMKMTENKVKGKDIIYGNECRNELLKGILTVSDVVKLTLGPRGRNVLLEKEYGSPLIINDGVTIAKNISLKDRKKNNGVKLMQESTNISNDKAGDGTSSTALMTATITKKGIEQVNRNHNPIPIQRGIQLASKMIIEKIKSLSTPIKTYKDILNIATIASNNDVHMGQIIANAYDKLGKNAAIILDDNADINDKLEFTEGYNFDRGIINPYLLYNENKDYIEYSNVSTLITDQNIDNIQSILPILEIFAKNKQPLCIIADDFSNEVLQTLIINKLKGAIKVLCIVTNSKYISADVGLDLNNLHNNMSSFDNNYLSLLGSANTLIVKKDRTSLITKEEYKKEIDERINVLKKEYEETTSKYDKEKLNERIAALSGGIAKILIGGNSETEQKERKFKYEDATNAVKSAIDIGYVPGGGVTYLEIIKSNFIQEIHKKIEEDLQISSNNDEKKYLELIGNLESEMELQKMGANIVVSSLDVITKQIADNAGVNGDNVVKIILNSKDKYGFGYDVNTNKFVNMVEKGIIDSTNVIISVIKNSCSIASMVLTTECMMVDHEKKDKGILDSSINSPNYLSKHRRTYKHKLHDDEDTDEDDEEDEDDEDDEDDLDDDDYDDEDEEDEEDEEDEDDEDDEDSMNDEYNYDE.

The transit peptide at 1–9 (MRMKRIHIL) directs the protein to the mitochondrion. The interval 636 to 700 (TYKHKLHDDE…SMNDEYNYDE (65 aa)) is disordered. Residues 644 to 700 (DEDTDEDDEEDEDDEDDEDDLDDDDYDDEDEEDEEDEEDEDDEDDEDSMNDEYNYDE) show a composition bias toward acidic residues.

It belongs to the chaperonin (HSP60) family.

The protein localises to the mitochondrion matrix. Its function is as follows. Implicated in mitochondrial protein import and macromolecular assembly. May facilitate the correct folding of imported proteins. May also prevent misfolding and promote the refolding and proper assembly of unfolded polypeptides generated under stress conditions in the mitochondrial matrix. The protein is Chaperonin CPN60, mitochondrial of Plasmodium falciparum (isolate FCR-3 / Gambia).